The sequence spans 156 residues: Small ribosomal subunit protein uS7 (156 aa).

The protein belongs to the universal ribosomal protein uS7 family. Part of the 30S ribosomal subunit. Contacts proteins S9 and S11.

In terms of biological role, one of the primary rRNA binding proteins, it binds directly to 16S rRNA where it nucleates assembly of the head domain of the 30S subunit. Is located at the subunit interface close to the decoding center, probably blocks exit of the E-site tRNA. This Mycolicibacterium gilvum (strain PYR-GCK) (Mycobacterium gilvum (strain PYR-GCK)) protein is Small ribosomal subunit protein uS7.